A 665-amino-acid polypeptide reads, in one-letter code: Coiled-coil domain-containing protein 138 (665 aa).

T48 bears the Phosphothreonine mark. S49 is modified (phosphoserine). The stretch at 198–323 (QQKFAEELQK…YEFMTIQRLK (126 aa)) forms a coiled coil. Residue S469 is modified to Phosphoserine.

In Homo sapiens (Human), this protein is Coiled-coil domain-containing protein 138 (CCDC138).